A 289-amino-acid polypeptide reads, in one-letter code: Protease HtpX homolog (289 aa).

The next 2 helical transmembrane spans lie at 11 to 31 (AALF…IAAG) and 34 to 54 (STTP…YGYW). H138 is a Zn(2+) binding site. Residue E139 is part of the active site. H142 is a Zn(2+) binding site. The next 2 helical transmembrane spans lie at 152–172 (SVVA…LIFG) and 182–202 (LATI…QMAI). Residue E207 coordinates Zn(2+).

Belongs to the peptidase M48B family. Zn(2+) is required as a cofactor.

It is found in the cell membrane. This chain is Protease HtpX homolog, found in Paenarthrobacter aurescens (strain TC1).